Reading from the N-terminus, the 504-residue chain is Cholesterol 7-alpha-monooxygenase (504 aa).

C444 contributes to the heme binding site.

Belongs to the cytochrome P450 family. The cofactor is heme.

It localises to the endoplasmic reticulum membrane. The protein localises to the microsome membrane. It carries out the reaction cholesterol + reduced [NADPH--hemoprotein reductase] + O2 = 7alpha-hydroxycholesterol + oxidized [NADPH--hemoprotein reductase] + H2O + H(+). Its pathway is lipid metabolism; bile acid biosynthesis. Catalyzes a rate-limiting step in cholesterol catabolism and bile acid biosynthesis by introducing a hydrophilic moiety at position 7 of cholesterol. Important for cholesterol homeostasis. The protein is Cholesterol 7-alpha-monooxygenase (CYP7A1) of Cricetulus griseus (Chinese hamster).